A 401-amino-acid polypeptide reads, in one-letter code: Deoxyhypusine synthase-like protein (401 aa).

This sequence belongs to the deoxyhypusine synthase family.

In Thermosynechococcus vestitus (strain NIES-2133 / IAM M-273 / BP-1), this protein is Deoxyhypusine synthase-like protein.